The chain runs to 659 residues: Pesticidal crystal protein Cry3Ba (659 aa).

The disordered stretch occupies residues 1–41 (MIRMGGRKMNPNNRSEYDTIKVTPNSELPTNHNQYPLADNP). A compositionally biased stretch (polar residues) spans 22 to 41 (VTPNSELPTNHNQYPLADNP).

It belongs to the delta endotoxin family.

Functionally, promotes colloidosmotic lysis by binding to the midgut epithelial cells of Coleoptera. This is Pesticidal crystal protein Cry3Ba (cry3Ba) from Bacillus thuringiensis subsp. tolworthi.